A 329-amino-acid chain; its full sequence is Centromere protein L (329 aa).

A phosphoserine mark is found at serine 40 and serine 54.

The protein belongs to the CENP-L/IML3 family. In terms of assembly, component of the CENPA-CAD complex, composed of CENPI, CENPK, CENPL, CENPO, CENPP, CENPQ, CENPR and CENPS. The CENPA-CAD complex interacts with the CENPA-NAC complex, at least composed of CENPA, CENPC, CENPH, CENPM, CENPN, CENPT and CENPU.

It is found in the nucleus. It localises to the chromosome. The protein resides in the centromere. Its function is as follows. Component of the CENPA-CAD (nucleosome distal) complex, a complex recruited to centromeres which is involved in assembly of kinetochore proteins, mitotic progression and chromosome segregation. May be involved in incorporation of newly synthesized CENPA into centromeres via its interaction with the CENPA-NAC complex. This is Centromere protein L (Cenpl) from Mus musculus (Mouse).